The chain runs to 571 residues: Membrane protein insertase YidC (571 aa).

The chain crosses the membrane as a helical span at residues 4 to 24 (TRVFLIFAWLMVAVLLWMEWS). The tract at residues 29–76 (APTPAPTTTSAPAAAQSVPGATPGSVPNAQVPGAPGQAAVQAQASATP) is disordered. Composition is skewed to low complexity over residues 34 to 43 (PTTTSAPAAA) and 57 to 76 (AQVP…SATP). 4 helical membrane-spanning segments follow: residues 369 to 389 (LVGN…LVLY), 440 to 460 (GGCL…WVLV), 483 to 503 (YFIL…LTPA), and 518 to 538 (PLVF…YWVV).

Belongs to the OXA1/ALB3/YidC family. Type 1 subfamily. As to quaternary structure, interacts with the Sec translocase complex via SecD. Specifically interacts with transmembrane segments of nascent integral membrane proteins during membrane integration.

It localises to the cell inner membrane. In terms of biological role, required for the insertion and/or proper folding and/or complex formation of integral membrane proteins into the membrane. Involved in integration of membrane proteins that insert both dependently and independently of the Sec translocase complex, as well as at least some lipoproteins. Aids folding of multispanning membrane proteins. The chain is Membrane protein insertase YidC from Stenotrophomonas maltophilia (strain R551-3).